Reading from the N-terminus, the 737-residue chain is Autophagy-related protein 22 (737 aa).

Positions 115 to 154 (RMSPANAGDNSDSYPYGDDTDGDSSSGLPPPRYPGDDTRP) are disordered. The segment covering 125–141 (SDSYPYGDDTDGDSSSG) has biased composition (low complexity). 4 consecutive transmembrane segments (helical) span residues 166 to 186 (YAFA…PILL), 232 to 252 (SFAM…VVSI), 264 to 284 (KLLL…IFIS), and 289 to 309 (LIGA…FVLL). The segment at 327 to 353 (GDYGSPGYATTEEGDDEDDEYQEDSTR) is disordered. Positions 338–349 (EEGDDEDDEYQE) are enriched in acidic residues. A glycan (N-linked (GlcNAc...) asparagine) is linked at asparagine 354. Residues 395-415 (GIGIGYIAGLFLQCVAIAILI) traverse the membrane as a helical segment. N-linked (GlcNAc...) asparagine glycosylation is present at asparagine 419. The next 7 membrane-spanning stretches (helical) occupy residues 426-446 (IVLC…AMWL), 487-507 (LVDI…IATT), 524-544 (WALG…AFSW), 559-579 (ILAC…GYLP), 593-613 (WEMY…SGYC), 632-652 (LYAI…GAII), and 661-681 (AFWF…FINV).

The protein belongs to the ATG22 family.

It localises to the vacuole membrane. Vacuolar effluxer which mediate the efflux of amino acids resulting from autophagic degradation. The release of autophagic amino acids allows the maintenance of protein synthesis and viability during nitrogen starvation. The protein is Autophagy-related protein 22 (apg-11) of Neurospora crassa (strain ATCC 24698 / 74-OR23-1A / CBS 708.71 / DSM 1257 / FGSC 987).